Reading from the N-terminus, the 401-residue chain is Chalcone synthase 4 (401 aa).

Cys168 is an active-site residue.

Belongs to the thiolase-like superfamily. Chalcone/stilbene synthases family.

The catalysed reaction is (E)-4-coumaroyl-CoA + 3 malonyl-CoA + 3 H(+) = 2',4,4',6'-tetrahydroxychalcone + 3 CO2 + 4 CoA. Its pathway is secondary metabolite biosynthesis; flavonoid biosynthesis. In terms of biological role, the primary product of this enzyme is 4,2',4',6'-tetrahydroxychalcone (also termed naringenin-chalcone or chalcone) which can under specific conditions spontaneously isomerize into naringenin. The chain is Chalcone synthase 4 (CHS4) from Sorghum bicolor (Sorghum).